A 323-amino-acid chain; its full sequence is ADP/ATP translocase 4 (323 aa).

Residues 1–23 (MQREPPKRKQEKKVEKGLFDATS) are Mitochondrial intermembrane-facing. The stretch at 22-114 (TSFGKDLLAG…FAFKDKYKQL (93 aa)) is one Solcar 1 repeat. The helical transmembrane segment at 24-53 (FGKDLLAGGVAAAVSKTTVAPIERVKLLLQ) threads the bilayer. Over 54-90 (VQASSKQISPEAQYKGIVDCLVRIPREQGFLSYWRGN) the chain is Mitochondrial matrix. A helical transmembrane segment spans residues 91–115 (LANVIRYFPTQALNFAFKDKYKQLF). ADP-binding residues include Arg96 and Lys108. At 116–125 (MSGVNKEKQF) the chain is on the mitochondrial intermembrane side. The helical transmembrane segment at 126–146 (WRWFLANLASGGAAGATSLCV) threads the bilayer. 2 Solcar repeats span residues 127-217 (RWFL…VKGL) and 224-311 (THFL…IKDL). Residues 147-194 (VYPLDFARTRLGADIGKGPEERQFKGLGDCIMKIAKSDGIVGLYQGFG) lie on the Mitochondrial matrix side of the membrane. A helical membrane pass occupies residues 195 to 215 (VSVQGIIVYRASYFGAYDTVK). Over 216-226 (GLLPKPKETHF) the chain is Mitochondrial intermembrane. Residues 227-247 (LVSFFIAQVVTTCSGILSYPF) traverse the membrane as a helical segment. Residues 248 to 287 (DTVRRRMMMQSGEAERQYKGTLDCFMKIYQQEGIGAFFRG) lie on the Mitochondrial matrix side of the membrane. Position 251 (Arg251) interacts with ADP. The important for transport activity stretch occupies residues 251–256 (RRRMMM). A Nucleotide carrier signature motif motif is present at residues 251-256 (RRRMMM). The chain crosses the membrane as a helical span at residues 288 to 305 (AFSNILRGTGGALVLVLY). At 306–323 (DKIKDLLNIDIGGSSSGD) the chain is on the mitochondrial intermembrane side.

Belongs to the mitochondrial carrier (TC 2.A.29) family. As to quaternary structure, monomer.

It localises to the mitochondrion inner membrane. The protein resides in the membrane. It is found in the cell projection. The protein localises to the cilium. Its subcellular location is the flagellum membrane. The catalysed reaction is ADP(in) + ATP(out) = ADP(out) + ATP(in). It carries out the reaction dATP(out) + ADP(in) = dATP(in) + ADP(out). It catalyses the reaction dADP(in) + ADP(out) = dADP(out) + ADP(in). The enzyme catalyses H(+)(in) = H(+)(out). The matrix-open state (m-state) is inhibited by the membrane-permeable bongkrekic acid (BKA). The cytoplasmic-open state (c-state) is inhibited by the membrane-impermeable toxic inhibitor carboxyatractyloside (CATR). Proton transporter activity is inhibited by ADP:ATP antiporter activity. In terms of biological role, ADP:ATP antiporter that mediates import of ADP into the mitochondrial matrix for ATP synthesis, and export of ATP out to fuel the cell. Cycles between the cytoplasmic-open state (c-state) and the matrix-open state (m-state): operates by the alternating access mechanism with a single substrate-binding site intermittently exposed to either the cytosolic (c-state) or matrix (m-state) side of the inner mitochondrial membrane. Specifically required during spermatogenesis, probably to mediate ADP:ATP exchange in spermatocytes. Large ATP supplies from mitochondria may be critical for normal progression of spermatogenesis during early stages of meiotic prophase I, including DNA double-strand break repair and chromosomal synapsis. In addition to its ADP:ATP antiporter activity, also involved in mitochondrial uncoupling and mitochondrial permeability transition pore (mPTP) activity. Plays a role in mitochondrial uncoupling by acting as a proton transporter: proton transport uncouples the proton flows via the electron transport chain and ATP synthase to reduce the efficiency of ATP production and cause mitochondrial thermogenesis. Proton transporter activity is inhibited by ADP:ATP antiporter activity, suggesting that SLC25A31/ANT4 acts as a master regulator of mitochondrial energy output by maintaining a delicate balance between ATP production (ADP:ATP antiporter activity) and thermogenesis (proton transporter activity). Proton transporter activity requires free fatty acids as cofactor, but does not transport it. Among nucleotides, may also exchange ADP for dATP and dADP. Also plays a key role in mPTP opening, a non-specific pore that enables free passage of the mitochondrial membranes to solutes of up to 1.5 kDa, and which contributes to cell death. It is however unclear if SLC25A31/ANT4 constitutes a pore-forming component of mPTP or regulates it. This is ADP/ATP translocase 4 from Bos taurus (Bovine).